We begin with the raw amino-acid sequence, 254 residues long: tRNA uridine(34) hydroxylase (254 aa).

In terms of domain architecture, Rhodanese spans 123 to 217 (QDPNVILLDT…YLESIPESES (95 aa)). C177 acts as the Cysteine persulfide intermediate in catalysis.

Belongs to the TrhO family.

It carries out the reaction uridine(34) in tRNA + AH2 + O2 = 5-hydroxyuridine(34) in tRNA + A + H2O. Catalyzes oxygen-dependent 5-hydroxyuridine (ho5U) modification at position 34 in tRNAs. The protein is tRNA uridine(34) hydroxylase of Legionella pneumophila (strain Paris).